The primary structure comprises 678 residues: AAC-rich mRNA clone AAC4 protein (678 aa).

Residues 55 to 73 are compositionally biased toward low complexity; the sequence is NNNNNNNNNNNNNNNNNNN. The interval 55–75 is disordered; sequence NNNNNNNNNNNNNNNNNNNTS. A helical membrane pass occupies residues 243–263; that stretch reads IIPIYHEIILVLCNWLVVAFY. Residues 318 to 346 are compositionally biased toward low complexity; sequence NNNNNNNNNNNNNNNNNNNNNNNNKTNNN. The interval 318-347 is disordered; sequence NNNNNNNNNNNNNNNNNNNNNNNNKTNNNQ.

The protein localises to the membrane. The chain is AAC-rich mRNA clone AAC4 protein (AAC4) from Dictyostelium discoideum (Social amoeba).